We begin with the raw amino-acid sequence, 280 residues long: MGLKKFKPITPGLRHLILPDFSEITKEEPEKSLLKPLKKSGGRNNFGHVTSRFRGGGHKRLYRIIDFRRDKDNIPAKVASIEYDPNRTARIALLHYADGEKRYIIAPEGLKVGDIIMSGENVDIKIGNNLPLKNIPDGTLIHNLELYPGRGGQLVRAAGTAAQILGKEGKWAYVRLPSGEIRLFDLNCRATIGQVSNVDHQNVSLGKAGRSRWLGRRPHVRGSAMNPVDHPHGGGEGKAPIGHPSPLTPWGKPTLGYKTRKKRKPSDRFIIQRANDKKEK.

Residues 215–280 form a disordered region; it reads GRRPHVRGSA…IQRANDKKEK (66 aa).

The protein belongs to the universal ribosomal protein uL2 family. Part of the 50S ribosomal subunit. Forms a bridge to the 30S subunit in the 70S ribosome.

In terms of biological role, one of the primary rRNA binding proteins. Required for association of the 30S and 50S subunits to form the 70S ribosome, for tRNA binding and peptide bond formation. It has been suggested to have peptidyltransferase activity; this is somewhat controversial. Makes several contacts with the 16S rRNA in the 70S ribosome. The chain is Large ribosomal subunit protein uL2 from Dictyoglomus thermophilum (strain ATCC 35947 / DSM 3960 / H-6-12).